A 229-amino-acid chain; its full sequence is Platelet-activating factor acetylhydrolase IB subunit alpha2 (229 aa).

Catalysis depends on residues S48, D193, and H196.

It belongs to the 'GDSL' lipolytic enzyme family. Platelet-activating factor acetylhydrolase IB beta/gamma subunits subfamily. As to quaternary structure, forms a catalytic dimer which is either homodimer (alpha2/alpha2 homodimer) or heterodimer with PAFAH1B3 (alpha2/alpha1 heterodimer). Component of the cytosolic (PAF-AH (I)) heterotetrameric enzyme, which is composed of PAFAH1B1 (beta), PAFAH1B2 (alpha2) and PAFAH1B3 (alpha1) subunits. The catalytic activity of the enzyme resides in the alpha1 (PAFAH1B3) and alpha2 (PAFAH1B2) subunits, whereas the beta subunit (PAFAH1B1) has regulatory activity. Trimer formation is not essential for the catalytic activity.

Its subcellular location is the cytoplasm. The enzyme catalyses a 1-O-alkyl-2-acetyl-sn-glycero-3-phosphocholine + H2O = a 1-O-alkyl-sn-glycero-3-phosphocholine + acetate + H(+). It catalyses the reaction 1-O-hexadecyl-2-acetyl-sn-glycero-3-phosphocholine + H2O = 1-O-hexadecyl-sn-glycero-3-phosphocholine + acetate + H(+). It carries out the reaction 1-O-hexadecyl-2-acetyl-sn-glycero-3-phosphate + H2O = 1-O-hexadecyl-sn-glycero-3-phosphate + acetate + H(+). The catalysed reaction is 1-O-hexadecyl-2-acetyl-sn-glycero-3-phosphoethanolamine + H2O = 1-O-hexadecyl-sn-glycero-3-phosphoethanolamine + acetate + H(+). Alpha2 catalytic subunit of the cytosolic type I platelet-activating factor (PAF) acetylhydrolase (PAF-AH (I)) heterotetrameric enzyme that catalyzes the hydrolyze of the acetyl group at the sn-2 position of PAF and its analogs and modulates the action of PAF. This Gallus gallus (Chicken) protein is Platelet-activating factor acetylhydrolase IB subunit alpha2 (PAFAH1B2).